The sequence spans 311 residues: Acetaldehyde dehydrogenase 2 (311 aa).

11-14 (SGNI) contacts NAD(+). The active-site Acyl-thioester intermediate is cysteine 131. Residues 162-170 (SAGPGTRAN) and asparagine 289 each bind NAD(+).

Belongs to the acetaldehyde dehydrogenase family.

The enzyme catalyses acetaldehyde + NAD(+) + CoA = acetyl-CoA + NADH + H(+). The chain is Acetaldehyde dehydrogenase 2 (mhpF) from Azotobacter vinelandii (strain DJ / ATCC BAA-1303).